The primary structure comprises 262 residues: Carbonic anhydrase 13 (262 aa).

An Alpha-carbonic anhydrase domain is found at 4 to 261; it reads LSWGYGEHNG…LKGRRVRASF (258 aa). The active-site Proton donor/acceptor is the His65. Zn(2+) is bound by residues His95, His97, and His120. Substrate is bound at residue 200 to 201; the sequence is TV.

This sequence belongs to the alpha-carbonic anhydrase family. It depends on Zn(2+) as a cofactor. Expressed in spleen, lung, kidney, heart, brain, skeletal muscle and testis.

The enzyme catalyses hydrogencarbonate + H(+) = CO2 + H2O. With respect to regulation, inhibited by coumarins, sulfonamide derivatives such as acetazolamide (AZA) and Foscarnet (phosphonoformate trisodium salt). Reversible hydration of carbon dioxide. This chain is Carbonic anhydrase 13 (Ca13), found in Mus musculus (Mouse).